The following is a 92-amino-acid chain: Bombyxin A-6 (92 aa).

Positions 1 to 19 (MKILLAIALMLSTVMWVST) are cleaved as a signal peptide. Position 20 is a pyrrolidone carboxylic acid (Q20). Disulfide bonds link C29–C79, C41–C92, and C78–C83. Residues 50–70 (SGAQFASYGSAWLMPYSEGRG) constitute a propeptide, c peptide like.

It belongs to the insulin family. Heterodimer of a B chain and an A chain linked by two disulfide bonds.

The protein resides in the secreted. Its function is as follows. Brain peptide responsible for activation of prothoracic glands to produce ecdysone in insects. The chain is Bombyxin A-6 (BBXA6) from Bombyx mori (Silk moth).